The primary structure comprises 578 residues: MDIFRILSRGASLNKKKGITTDYALPSEKQTQKQKHKQESLLNEVERETDFFHTRKHNSNSTTTSGKGDKLTNGANSNKEEQMETNETKAKEEEIPPPELTTEEDAQTFRNLHKSKVTGDDIPIPIGSFQDMIGRFHINKKVLSNLIDNEFVEPTPIQCESIPITLNNRDLIACAPTGSGKTLAFLIPLVQQILSKNVSKNHGIRGLIISPTNELAVQIFQELEIITRGCKQINVAILSKQLASKLNNNIIKSSKYDIIVSTPLRLIDVVKQGNMDLSKIEQLIIDEADKLFDHGFAEQTDEILTHCTNPKIRKSIFSATIPSSVEEMAHSIMKDPLRIIIGHKEAASNTIDQKLVFTGNEQGKLLAIRQMIQQGEFKPPIIIFLQSITRAKALFHELLYDRLNVDVIHAERTPKQREEVIKRFKNGDIWVLITTDVLARGVDFKGVNLVINYDVPQSAQAYVHRIGRTGRGGKAGKAVTFFTKEDDKAIKPILNVMKQSGCNDGYSQWMEDMGKLSKKEKKQIKTHEIQRKKISTVPKVIKQKRKQRQDMIAASKRRKQESKQESKQESHSNDEREE.

A disordered region spans residues 1 to 95 (MDIFRILSRG…NETKAKEEEI (95 aa)). Composition is skewed to basic and acidic residues over residues 44-53 (EVERETDFFH) and 78-94 (NKEE…KEEE). Positions 131 to 159 (DMIGRFHINKKVLSNLIDNEFVEPTPIQC) match the Q motif motif. Residues 162–339 (IPITLNNRDL…HSIMKDPLRI (178 aa)) enclose the Helicase ATP-binding domain. 175–182 (APTGSGKT) serves as a coordination point for ATP. The DEAD box motif lies at 286 to 289 (DEAD). The Helicase C-terminal domain maps to 350–514 (TIDQKLVFTG…GYSQWMEDMG (165 aa)). 2 stretches are compositionally biased toward basic and acidic residues: residues 517-531 (SKKE…EIQR) and 561-578 (ESKQ…EREE). Residues 517–578 (SKKEKKQIKT…ESHSNDEREE (62 aa)) are disordered.

Belongs to the DEAD box helicase family. DDX52/ROK1 subfamily. As to quaternary structure, interacts with the U3 snoRNA and is associated with the 90S and 40S pre-ribosomes.

Its subcellular location is the nucleus. The protein localises to the nucleolus. It carries out the reaction ATP + H2O = ADP + phosphate + H(+). In terms of biological role, ATP-dependent RNA helicase involved in 40S ribosomal subunit biogenesis. Required for the processing and cleavage of 35S pre-rRNA at sites A0, A1, and A2, leading to mature 18S rRNA. The chain is ATP-dependent RNA helicase CHR1 (CHR1) from Candida albicans (strain SC5314 / ATCC MYA-2876) (Yeast).